Here is a 635-residue protein sequence, read N- to C-terminus: MIKITLKDGSVREYNEGITIKEVAESISAGLARVALAGEVNGEVKDLSYPLENDCTLNLLTFDDEGGRDAYRHTTSHILAQAVKRLYPDAKLAIGPAIENGFYYDFDVEKPFSVEDLEKIEEEMKKIIKEDYKLERFTLPREEAIKFMEERNEPYKVELIRDLPEGETISFYKQGDFVDLCAGPHIESTGKVKAFKLMSVAGAYWRGNEKNKMLQRIYGTSFTKKSDLDAYITRIEEAKKRDHRKLGRELDLFDIYEEGPGFPFFMPKGMVLRNVLEEYWREEHRKAGYQEIKTPIILNEELWHRSGHWDHYKENMYFTKIDEADFAIKPMNCPGGMLVYKRKLHSYRDLPQRLAELGLVHRHELSGVLHGLMRVRCFTQDDAHIFMTPDQIESEILGVISLIDDFYKVFGFKYHVELSTRPENSMGSDEDWERATNALKNALEKKGIDYKINEGDGAFYGPKIDFHLEDSIGRTWQCGTIQLDFQMPERFDLTYIGPDGEKHRPVMIHRVVFGSIERFIAILTEHYAGAFPVWLSPVQVKILPILEKQHDYVAEVKKALEEKGVRVEADLRNEKIGYKIREAQLEKVPYMLVIGDKEMENRTVAVRSRKDGDLGPMRLEDFVNRIVEAIKNKEN.

One can recognise a TGS domain in the interval 1–61 (MIKITLKDGS…ENDCTLNLLT (61 aa)). The segment at 242-532 (DHRKLGRELD…LTEHYAGAFP (291 aa)) is catalytic. Zn(2+)-binding residues include Cys-333, His-384, and His-509.

It belongs to the class-II aminoacyl-tRNA synthetase family. In terms of assembly, homodimer. Requires Zn(2+) as cofactor.

It localises to the cytoplasm. The catalysed reaction is tRNA(Thr) + L-threonine + ATP = L-threonyl-tRNA(Thr) + AMP + diphosphate + H(+). Functionally, catalyzes the attachment of threonine to tRNA(Thr) in a two-step reaction: L-threonine is first activated by ATP to form Thr-AMP and then transferred to the acceptor end of tRNA(Thr). Also edits incorrectly charged L-seryl-tRNA(Thr). The sequence is that of Threonine--tRNA ligase from Acetivibrio thermocellus (strain ATCC 27405 / DSM 1237 / JCM 9322 / NBRC 103400 / NCIMB 10682 / NRRL B-4536 / VPI 7372) (Clostridium thermocellum).